A 453-amino-acid polypeptide reads, in one-letter code: tRNA(Ile)-lysidine synthase (453 aa).

Residue 27 to 32 (SGGSDS) participates in ATP binding.

It belongs to the tRNA(Ile)-lysidine synthase family.

The protein localises to the cytoplasm. It carries out the reaction cytidine(34) in tRNA(Ile2) + L-lysine + ATP = lysidine(34) in tRNA(Ile2) + AMP + diphosphate + H(+). Functionally, ligates lysine onto the cytidine present at position 34 of the AUA codon-specific tRNA(Ile) that contains the anticodon CAU, in an ATP-dependent manner. Cytidine is converted to lysidine, thus changing the amino acid specificity of the tRNA from methionine to isoleucine. The sequence is that of tRNA(Ile)-lysidine synthase from Rhizobium meliloti (strain 1021) (Ensifer meliloti).